The chain runs to 597 residues: Elongation factor 4 (597 aa).

The tr-type G domain occupies 2-184; sequence KNIRNFSIIA…EIVAKIPAPT (183 aa). Residues 14–19 and 131–134 contribute to the GTP site; these read DHGKST and NKID.

This sequence belongs to the TRAFAC class translation factor GTPase superfamily. Classic translation factor GTPase family. LepA subfamily.

Its subcellular location is the cell inner membrane. The catalysed reaction is GTP + H2O = GDP + phosphate + H(+). Functionally, required for accurate and efficient protein synthesis under certain stress conditions. May act as a fidelity factor of the translation reaction, by catalyzing a one-codon backward translocation of tRNAs on improperly translocated ribosomes. Back-translocation proceeds from a post-translocation (POST) complex to a pre-translocation (PRE) complex, thus giving elongation factor G a second chance to translocate the tRNAs correctly. Binds to ribosomes in a GTP-dependent manner. In Neisseria meningitidis serogroup C (strain 053442), this protein is Elongation factor 4.